We begin with the raw amino-acid sequence, 329 residues long: Beta-ketoacyl-[acyl-carrier-protein] synthase III (329 aa).

Active-site residues include Cys113 and His255. Residues 256–260 (QANQR) form an ACP-binding region. Residue Asn285 is part of the active site.

It belongs to the thiolase-like superfamily. FabH family. In terms of assembly, homodimer.

The protein resides in the cytoplasm. It carries out the reaction malonyl-[ACP] + acetyl-CoA + H(+) = 3-oxobutanoyl-[ACP] + CO2 + CoA. It participates in lipid metabolism; fatty acid biosynthesis. Functionally, catalyzes the condensation reaction of fatty acid synthesis by the addition to an acyl acceptor of two carbons from malonyl-ACP. Catalyzes the first condensation reaction which initiates fatty acid synthesis and may therefore play a role in governing the total rate of fatty acid production. Possesses both acetoacetyl-ACP synthase and acetyl transacylase activities. Its substrate specificity determines the biosynthesis of branched-chain and/or straight-chain of fatty acids. In Chlorobium chlorochromatii (strain CaD3), this protein is Beta-ketoacyl-[acyl-carrier-protein] synthase III.